A 205-amino-acid chain; its full sequence is Dephospho-CoA kinase (205 aa).

Positions 5–201 constitute a DPCK domain; that stretch reads VVGLTGGIGS…QRYLQLSGNH (197 aa). Residue 13–18 coordinates ATP; it reads GSGKTT.

The protein belongs to the CoaE family.

It is found in the cytoplasm. It catalyses the reaction 3'-dephospho-CoA + ATP = ADP + CoA + H(+). It functions in the pathway cofactor biosynthesis; coenzyme A biosynthesis; CoA from (R)-pantothenate: step 5/5. Its function is as follows. Catalyzes the phosphorylation of the 3'-hydroxyl group of dephosphocoenzyme A to form coenzyme A. The polypeptide is Dephospho-CoA kinase (Shewanella oneidensis (strain ATCC 700550 / JCM 31522 / CIP 106686 / LMG 19005 / NCIMB 14063 / MR-1)).